Here is a 55-residue protein sequence, read N- to C-terminus: Large ribosomal subunit protein bL33 (55 aa).

Belongs to the bacterial ribosomal protein bL33 family.

In Bradyrhizobium sp. (strain BTAi1 / ATCC BAA-1182), this protein is Large ribosomal subunit protein bL33.